The following is a 511-amino-acid chain: Cytochrome P450 4B1 (511 aa).

Heme-binding residues include E315 and C453.

This sequence belongs to the cytochrome P450 family. Requires heme as cofactor.

The protein resides in the endoplasmic reticulum membrane. It localises to the microsome membrane. The enzyme catalyses an organic molecule + reduced [NADPH--hemoprotein reductase] + O2 = an alcohol + oxidized [NADPH--hemoprotein reductase] + H2O + H(+). Its function is as follows. Cytochromes P450 are a group of heme-thiolate monooxygenases. In liver microsomes, this enzyme is involved in an NADPH-dependent electron transport pathway. It oxidizes a variety of structurally unrelated compounds, including steroids, fatty acids, and xenobiotics. This Rattus norvegicus (Rat) protein is Cytochrome P450 4B1 (Cyp4b1).